The sequence spans 115 residues: U3-lycotoxin-Ls1j (115 aa).

Positions M1–A20 are cleaved as a signal peptide. The propeptide occupies E21–R44. 4 disulfide bridges follow: C48–C63, C55–C72, C62–C87, and C74–C85.

It belongs to the neurotoxin 19 (CSTX) family. 01 subfamily. Expressed by the venom gland.

It localises to the secreted. In Lycosa singoriensis (Wolf spider), this protein is U3-lycotoxin-Ls1j.